Reading from the N-terminus, the 348-residue chain is MEDLYGILGVDHDASVDEIRRAYRRLARELHPDINPDSADRFKAVTHAYNILSDPEQRQRYDRHVSGGFSSDFNLSDLFQSFFDTSAEFQRGSDLLVNIDIDLKTAIYGGSQVVKIDSLVVCDVCNGTRSEPGYKAEVCFDCNGSGVVRGEVRTTLGNLITQNTCSKCRGNGERIDHPCRRCYGNGSRSAPRDITINIPPGVETGMRIKIPNMGNAGGAMPGDLYVDCKVKEHPYFLRDGQDLYCRLDISLVDALLGTKVKIDSLDGELAVVIPALSQNRDVIRIANKGAVTLRGGKGDLCIVLNVLLMQKLDPEHRALLKKIMPNPPKPKLAKRTSGFFSWLKNKFT.

One can recognise a J domain in the interval 3 to 65; sequence DLYGILGVDH…EQRQRYDRHV (63 aa). The CR-type zinc finger occupies 109 to 191; that stretch reads GGSQVVKIDS…CYGNGSRSAP (83 aa). Positions 122, 125, 139, 142, 165, 168, 179, and 182 each coordinate Zn(2+). CXXCXGXG motif repeat units follow at residues 122–129, 139–146, 165–172, and 179–186; these read CDVCNGTR, CFDCNGSG, CSKCRGNG, and CRRCYGNG.

This sequence belongs to the DnaJ family. In terms of assembly, homodimer. The cofactor is Zn(2+).

The protein resides in the cytoplasm. Functionally, participates actively in the response to hyperosmotic and heat shock by preventing the aggregation of stress-denatured proteins and by disaggregating proteins, also in an autonomous, DnaK-independent fashion. Unfolded proteins bind initially to DnaJ; upon interaction with the DnaJ-bound protein, DnaK hydrolyzes its bound ATP, resulting in the formation of a stable complex. GrpE releases ADP from DnaK; ATP binding to DnaK triggers the release of the substrate protein, thus completing the reaction cycle. Several rounds of ATP-dependent interactions between DnaJ, DnaK and GrpE are required for fully efficient folding. Also involved, together with DnaK and GrpE, in the DNA replication of plasmids through activation of initiation proteins. This is Chaperone protein DnaJ from Tropheryma whipplei (strain TW08/27) (Whipple's bacillus).